The chain runs to 62 residues: Conotoxin Sr5.7 (62 aa).

A signal peptide spans 1-22 (MRCLPVFVILLLLIASAPSVDA). Positions 23 to 44 (QLKTKDDVPLASFHDNAKGTQH) are excised as a propeptide.

Belongs to the conotoxin T superfamily. In terms of processing, contains 2 disulfide bonds that can be either 'C1-C3, C2-C4' or 'C1-C4, C2-C3', since these disulfide connectivities have been observed for conotoxins with cysteine framework V (for examples, see AC P0DQQ7 and AC P81755). Expressed by the venom duct.

Its subcellular location is the secreted. The sequence is that of Conotoxin Sr5.7 from Conus spurius (Alphabet cone).